Here is a 173-residue protein sequence, read N- to C-terminus: C-phycocyanin-2 beta subunit (173 aa).

Asn-73 is modified (N4-methylasparagine). The (2R,3E)-phycocyanobilin site is built by Cys-83 and Cys-154.

This sequence belongs to the phycobiliprotein family. As to quaternary structure, heterodimer of an alpha and a beta subunit, which further assembles into trimers and the trimers into hexamers. Post-translationally, contains two covalently linked bilin chromophores.

The protein resides in the cellular thylakoid membrane. Light-harvesting photosynthetic bile pigment-protein from the phycobiliprotein complex (phycobilisome, PBS). Phycocyanin is the major phycobiliprotein in the PBS rod. The chain is C-phycocyanin-2 beta subunit (cpcB2) from Synechococcus sp. (strain ATCC 27144 / PCC 6301 / SAUG 1402/1) (Anacystis nidulans).